A 137-amino-acid polypeptide reads, in one-letter code: Large ribosomal subunit protein bL17 (137 aa).

Belongs to the bacterial ribosomal protein bL17 family. In terms of assembly, part of the 50S ribosomal subunit. Contacts protein L32.

The sequence is that of Large ribosomal subunit protein bL17 from Caulobacter sp. (strain K31).